Consider the following 322-residue polypeptide: Helix-loop-helix 34 (322 aa).

The span at 1 to 11 shows a compositional bias: basic and acidic residues; sequence METNLSEEKQK. Residues 1-23 form a disordered region; that stretch reads METNLSEEKQKPSKSQAQQRRQM. Residues 8 to 62 form the bHLH domain; that stretch reads EKQKPSKSQAQQRRQMENYEFSQLANELPLARAISGQHIDKTTMVRLATAYIKLH. 2 consecutive PAS domains span residues 82 to 152 and 203 to 276; these read DSLW…DLNW and PTPV…FNLG.

Efficient DNA binding requires dimerization with another bHLH protein. In terms of tissue distribution, expressed in a small subset of neurons, probably AVJL and AVJR. Expressed in the AVH neurons.

The protein localises to the nucleus. Functionally, transcription factor. Involved in specifying AVH neuron identity, acting in concert with unc-42. Involved in serotonin-mediated feeding behavior, probably acting by modulating expression of genes involved in glutamate signaling. This Caenorhabditis elegans protein is Helix-loop-helix 34 (hlh-34).